The chain runs to 335 residues: Ig gamma-2A chain C region secreted form (335 aa).

3 Ig-like domains span residues 6-98 (PSVY…KKIE), 126-225 (PSVF…KTIS), and 234-330 (PQVY…KTIS). An N-linked (GlcNAc...) asparagine glycan is attached at N185.

The protein localises to the secreted. The protein is Ig gamma-2A chain C region secreted form of Mus musculus (Mouse).